A 342-amino-acid chain; its full sequence is Phenylalanine--tRNA ligase alpha subunit (342 aa).

Residue glutamate 257 participates in Mg(2+) binding.

This sequence belongs to the class-II aminoacyl-tRNA synthetase family. Phe-tRNA synthetase alpha subunit type 1 subfamily. In terms of assembly, tetramer of two alpha and two beta subunits. Mg(2+) serves as cofactor.

Its subcellular location is the cytoplasm. The enzyme catalyses tRNA(Phe) + L-phenylalanine + ATP = L-phenylalanyl-tRNA(Phe) + AMP + diphosphate + H(+). This chain is Phenylalanine--tRNA ligase alpha subunit, found in Chlamydia trachomatis serovar A (strain ATCC VR-571B / DSM 19440 / HAR-13).